The primary structure comprises 228 residues: LHFPL tetraspan subfamily member 2 protein (228 aa).

4 helical membrane passes run 11 to 31 (MLWTLLSIVVAFAELIAFMSA), 102 to 122 (IFLAVGIFILCMVALVSVFTM), 132 to 152 (IFNVCGLLQGIAGLFLILGLI), and 181 to 201 (LGWAFYTAIGGTVLTFICAVF).

This sequence belongs to the LHFP family. Expressed in all tissues and cell lines examined except brain and peripheral blood leukocytes.

The protein resides in the membrane. Plays a role in female and male fertility. Involved in distal reproductive tract development. The protein is LHFPL tetraspan subfamily member 2 protein of Homo sapiens (Human).